Reading from the N-terminus, the 412-residue chain is Fringe glycosyltransferase (412 aa).

Over 1–15 (MMSLTVLSPPQRFKR) the chain is Cytoplasmic. Residues 16–34 (ILQAMMLAVAVVYMTLLLY) traverse the membrane as a helical; Signal-anchor for type II membrane protein segment. Topologically, residues 35 to 412 (QSAYGYPGIQ…FPYFSFCPPR (378 aa)) are lumenal. Residue R164 coordinates substrate. 2 disulfide bridges follow: C204/C215 and C233/C297. Substrate is bound at residue D237. Residue D238 coordinates Mn(2+). Residue D327 is part of the active site. H351 provides a ligand contact to Mn(2+). The cysteines at positions 400 and 409 are disulfide-linked.

The protein belongs to the glycosyltransferase 31 family. Mn(2+) serves as cofactor. In terms of tissue distribution, expressed in dorsal cells.

It localises to the golgi apparatus membrane. It catalyses the reaction 3-O-(alpha-L-fucosyl)-L-threonyl-[EGF-like domain protein] + UDP-N-acetyl-alpha-D-glucosamine = 3-O-(N-acetyl-beta-D-glucosaminyl-(1-&gt;3)-alpha-L-fucosyl)-L-threonyl-[EGF-like domain protein] + UDP + H(+). The enzyme catalyses 3-O-(alpha-L-fucosyl)-L-seryl-[EGF-like domain protein] + UDP-N-acetyl-alpha-D-glucosamine = 3-O-(N-acetyl-beta-D-glucosaminyl-(1-&gt;3)-alpha-L-fucosyl)-L-seryl-[EGF-like domain protein] + UDP + H(+). In terms of biological role, glycosyltransferase involved in the elongation of O-linked ligands to activate Notch signaling. Possesses fucose-specific beta-1,3-N-acetylglucosaminyltransferase activity; extends the O-linked fucose on the Notch EGF repeats. Boundary-specific cell-signaling molecule that is responsible for dorsal-ventral cell interactions during wing development. The sequence is that of Fringe glycosyltransferase (fng) from Drosophila melanogaster (Fruit fly).